The primary structure comprises 169 residues: Peptide methionine sulfoxide reductase MsrA (169 aa).

Residue cysteine 10 is part of the active site.

It belongs to the MsrA Met sulfoxide reductase family.

The enzyme catalyses L-methionyl-[protein] + [thioredoxin]-disulfide + H2O = L-methionyl-(S)-S-oxide-[protein] + [thioredoxin]-dithiol. It catalyses the reaction [thioredoxin]-disulfide + L-methionine + H2O = L-methionine (S)-S-oxide + [thioredoxin]-dithiol. Its function is as follows. Has an important function as a repair enzyme for proteins that have been inactivated by oxidation. Catalyzes the reversible oxidation-reduction of methionine sulfoxide in proteins to methionine. This chain is Peptide methionine sulfoxide reductase MsrA, found in Streptococcus equi subsp. zooepidemicus (strain H70).